A 315-amino-acid polypeptide reads, in one-letter code: Ribosome biogenesis protein BRX1 homolog 1 (315 aa).

Positions 1–35 are disordered; it reads MGRKRKHSETVTAAPVKDSAPERPQRTLLGWKDKK. Basic and acidic residues predominate over residues 19–35; it reads SAPERPQRTLLGWKDKK. A Brix domain is found at 53-256; it reads EKVLVTCSRR…PIKIFGGSFG (204 aa).

The protein belongs to the BRX1 family. As to expression, expressed in roots, rosette leaves, stems, flowers, siliques and seeds.

It localises to the nucleus. Its subcellular location is the nucleolus. In terms of biological role, involved in pre-rRNA processing and required for biogenesis of the large (60S) ribosomal subunit. Required for proper development. This chain is Ribosome biogenesis protein BRX1 homolog 1, found in Arabidopsis thaliana (Mouse-ear cress).